The sequence spans 463 residues: NADH dehydrogenase [ubiquinone] iron-sulfur protein 2, mitochondrial (463 aa).

A mitochondrion-targeting transit peptide spans M1–G33. K62 bears the N6-acetyllysine mark. R118 bears the Symmetric dimethylarginine mark. Residues C326, C332, and C347 each coordinate [4Fe-4S] cluster.

It belongs to the complex I 49 kDa subunit family. In terms of assembly, core subunit of respiratory chain NADH dehydrogenase (Complex I) which is composed of 45 different subunits. Component of the iron-sulfur (IP) fragment of the enzyme. Interacts with NDUFAF3. Interacts with NDUFAF7. Interacts with CERS2. It depends on [4Fe-4S] cluster as a cofactor. In terms of processing, dimethylation at Arg-118 by NDUFAF7 takes place after NDUFS2 assembles into the complex I, leading to stabilize the early intermediate complex.

It is found in the mitochondrion inner membrane. It carries out the reaction a ubiquinone + NADH + 5 H(+)(in) = a ubiquinol + NAD(+) + 4 H(+)(out). Functionally, core subunit of the mitochondrial membrane respiratory chain NADH dehydrogenase (Complex I) which catalyzes electron transfer from NADH through the respiratory chain, using ubiquinone as an electron acceptor. Essential for the catalytic activity and assembly of complex I. Redox-sensitive, critical component of the oxygen-sensing pathway in the pulmonary vasculature which plays a key role in acute pulmonary oxygen-sensing and hypoxic pulmonary vasoconstriction. Plays an important role in carotid body sensing of hypoxia. Essential for glia-like neural stem and progenitor cell proliferation, differentiation and subsequent oligodendrocyte or neuronal maturation. The polypeptide is NADH dehydrogenase [ubiquinone] iron-sulfur protein 2, mitochondrial (NDUFS2) (Bos taurus (Bovine)).